Here is a 149-residue protein sequence, read N- to C-terminus: Nucleoside diphosphate kinase (149 aa).

The ATP site is built by lysine 9, phenylalanine 57, arginine 85, threonine 91, arginine 102, and asparagine 112. The active-site Pros-phosphohistidine intermediate is the histidine 115.

The protein belongs to the NDK family. Homotetramer. It depends on Mg(2+) as a cofactor.

It is found in the cytoplasm. The enzyme catalyses a 2'-deoxyribonucleoside 5'-diphosphate + ATP = a 2'-deoxyribonucleoside 5'-triphosphate + ADP. The catalysed reaction is a ribonucleoside 5'-diphosphate + ATP = a ribonucleoside 5'-triphosphate + ADP. In terms of biological role, major role in the synthesis of nucleoside triphosphates other than ATP. The ATP gamma phosphate is transferred to the NDP beta phosphate via a ping-pong mechanism, using a phosphorylated active-site intermediate. This Acaryochloris marina (strain MBIC 11017) protein is Nucleoside diphosphate kinase.